Here is a 284-residue protein sequence, read N- to C-terminus: RNase adapter protein RapZ (284 aa).

Residue 8–15 participates in ATP binding; that stretch reads GRSGSGKS. 56–59 is a binding site for GTP; it reads DVRN. The tract at residues 266–284 is RNA-binding; that stretch reads RSRGKNVQSRHRTLEKRKS.

It belongs to the RapZ-like family. RapZ subfamily. In terms of assembly, homotrimer.

Functionally, modulates the synthesis of GlmS, by affecting the processing and stability of the regulatory small RNA GlmZ. When glucosamine-6-phosphate (GlcN6P) concentrations are high in the cell, RapZ binds GlmZ and targets it to cleavage by RNase E. Consequently, GlmZ is inactivated and unable to activate GlmS synthesis. Under low GlcN6P concentrations, RapZ is sequestered and inactivated by an other regulatory small RNA, GlmY, preventing GlmZ degradation and leading to synthesis of GlmS. The chain is RNase adapter protein RapZ from Klebsiella oxytoca.